The primary structure comprises 502 residues: Histidine--tRNA ligase (502 aa).

It belongs to the class-II aminoacyl-tRNA synthetase family. As to quaternary structure, homodimer.

The protein resides in the cytoplasm. It carries out the reaction tRNA(His) + L-histidine + ATP = L-histidyl-tRNA(His) + AMP + diphosphate + H(+). In Brucella suis (strain ATCC 23445 / NCTC 10510), this protein is Histidine--tRNA ligase.